The primary structure comprises 119 residues: Protein TusC (119 aa).

It belongs to the DsrF/TusC family. As to quaternary structure, heterohexamer, formed by a dimer of trimers. The hexameric TusBCD complex contains 2 copies each of TusB, TusC and TusD. The TusBCD complex interacts with TusE.

It is found in the cytoplasm. Part of a sulfur-relay system required for 2-thiolation of 5-methylaminomethyl-2-thiouridine (mnm(5)s(2)U) at tRNA wobble positions. This is Protein TusC from Pectobacterium carotovorum subsp. carotovorum (strain PC1).